Reading from the N-terminus, the 216-residue chain is Adenylate kinase (216 aa).

An ATP-binding site is contributed by Gly10–Thr15. The segment at Ser30–Val59 is NMP. AMP is bound by residues Thr31, Arg36, Lys57–Val59, Gly85–Arg88, and Gln92. Residues Gly126–Asp163 form an LID region. Arg127 is a binding site for ATP. Zn(2+) contacts are provided by Cys130 and Cys133. Residue Thr136–Tyr137 coordinates ATP. Cys150 and Cys153 together coordinate Zn(2+). Residues Arg160 and Arg171 each contribute to the AMP site. An ATP-binding site is contributed by Gln199.

This sequence belongs to the adenylate kinase family. As to quaternary structure, monomer.

The protein resides in the cytoplasm. It catalyses the reaction AMP + ATP = 2 ADP. Its pathway is purine metabolism; AMP biosynthesis via salvage pathway; AMP from ADP: step 1/1. Its function is as follows. Catalyzes the reversible transfer of the terminal phosphate group between ATP and AMP. Plays an important role in cellular energy homeostasis and in adenine nucleotide metabolism. This is Adenylate kinase from Symbiobacterium thermophilum (strain DSM 24528 / JCM 14929 / IAM 14863 / T).